The following is a 435-amino-acid chain: Enolase (435 aa).

Residue Q163 coordinates (2R)-2-phosphoglycerate. E205 (proton donor) is an active-site residue. Residues D243, E292, and D319 each contribute to the Mg(2+) site. Positions 344, 373, 374, and 395 each coordinate (2R)-2-phosphoglycerate. The active-site Proton acceptor is the K344.

This sequence belongs to the enolase family. Homooctamer, a tetramer of homodimers. It depends on Mg(2+) as a cofactor.

The protein resides in the cytoplasm. It localises to the secreted. It is found in the cell surface. Its subcellular location is the cell wall. The enzyme catalyses (2R)-2-phosphoglycerate = phosphoenolpyruvate + H2O. It functions in the pathway carbohydrate degradation; glycolysis; pyruvate from D-glyceraldehyde 3-phosphate: step 4/5. Functionally, catalyzes the reversible conversion of 2-phosphoglycerate (2-PG) into phosphoenolpyruvate (PEP). It is essential for the degradation of carbohydrates via glycolysis. Its function is as follows. 'Moonlights' as a plasminogen receptor. Binds plasminogen and more weakly plasmin when expressed on the bacterial cell surface; probably has more than one plasmin(ogen) binding site, may bind via Lys residues. Plasminogen binding potentially allows the bacterium to acquire surface-associated proteolytic activity, which in turn contributes to tissue invasion and virulence. This chain is Enolase, found in Streptococcus pyogenes serotype M6 (strain ATCC BAA-946 / MGAS10394).